The chain runs to 275 residues: NADPH-dependent 7-cyano-7-deazaguanine reductase (275 aa).

A substrate-binding site is contributed by 81-83 (IES). Position 83 to 84 (83 to 84 (SK)) interacts with NADPH. Cys181 (thioimide intermediate) is an active-site residue. The active-site Proton donor is the Asp188. Residue 220-221 (HE) coordinates substrate. 249-250 (RG) provides a ligand contact to NADPH.

It belongs to the GTP cyclohydrolase I family. QueF type 2 subfamily. As to quaternary structure, homodimer.

The protein localises to the cytoplasm. It catalyses the reaction 7-aminomethyl-7-carbaguanine + 2 NADP(+) = 7-cyano-7-deazaguanine + 2 NADPH + 3 H(+). It participates in tRNA modification; tRNA-queuosine biosynthesis. Catalyzes the NADPH-dependent reduction of 7-cyano-7-deazaguanine (preQ0) to 7-aminomethyl-7-deazaguanine (preQ1). The protein is NADPH-dependent 7-cyano-7-deazaguanine reductase of Xylella fastidiosa (strain M12).